The chain runs to 418 residues: Glutamyl-tRNA reductase (418 aa).

Substrate is bound by residues 49–52, serine 109, 114–116, and glutamine 120; these read TCNR and EPQ. Cysteine 50 (nucleophile) is an active-site residue. 189–194 lines the NADP(+) pocket; sequence GAGETI.

This sequence belongs to the glutamyl-tRNA reductase family. As to quaternary structure, homodimer.

The enzyme catalyses (S)-4-amino-5-oxopentanoate + tRNA(Glu) + NADP(+) = L-glutamyl-tRNA(Glu) + NADPH + H(+). It participates in porphyrin-containing compound metabolism; protoporphyrin-IX biosynthesis; 5-aminolevulinate from L-glutamyl-tRNA(Glu): step 1/2. Catalyzes the NADPH-dependent reduction of glutamyl-tRNA(Glu) to glutamate 1-semialdehyde (GSA). The polypeptide is Glutamyl-tRNA reductase (Cronobacter sakazakii (strain ATCC BAA-894) (Enterobacter sakazakii)).